Here is a 719-residue protein sequence, read N- to C-terminus: Protein psiJ (719 aa).

The N-terminal stretch at Met-1–Gly-21 is a signal peptide. Residues Asp-22–Gly-653 lie on the Extracellular side of the membrane. Residues Asn-46, Asn-59, Asn-86, Asn-113, Asn-301, Asn-372, Asn-435, Asn-457, Asn-562, and Asn-628 are each glycosylated (N-linked (GlcNAc...) asparagine). A PA14 domain is found at Gln-112–Thr-260. Residues Val-654–Ala-674 traverse the membrane as a helical segment. At Leu-675–Thr-719 the chain is on the cytoplasmic side.

Belongs to the prespore-cell-inducing factor family.

The protein localises to the membrane. The sequence is that of Protein psiJ (psiJ) from Dictyostelium discoideum (Social amoeba).